A 275-amino-acid polypeptide reads, in one-letter code: C-type lectin domain family 12 member B (275 aa).

The Cytoplasmic segment spans residues 1–41; sequence MSDEVTYATLMLQDSARVRGNQDGNNLRKEGHPAQSSLWRG. An ITIM motif motif is present at residues 5-10; it reads VTYATL. A Phosphotyrosine modification is found at Y7. The helical; Signal-anchor for type II membrane protein transmembrane segment at 42–64 threads the bilayer; the sequence is AALSLMTLCLVLVTGLVTLATMF. The Extracellular portion of the chain corresponds to 65–275; that stretch reads LQVSNDINSD…ASLVKTEDLD (211 aa). N-linked (GlcNAc...) asparagine glycosylation is found at N91, N175, and N236. The region spanning 149-263 is the C-type lectin domain; the sequence is YGNSCYYFSI…CSAEIPWICE (115 aa). Cystine bridges form between C171–C262 and C241–C254.

Homodimer. Interacts (via ITIM motif) with PTPN6. Interacts (via ITIM motif) with PTPN11; this interaction triggers dephosphorylation and activation of PTPN11.

The protein localises to the cell membrane. Its function is as follows. Inhibitory receptor postulated to negatively regulate immune and non-immune functions. Upon phosphorylation, recruits SH2 domain-containing PTPN6 and PTPN11 phosphatases to its ITIM motif and antagonizes activation signals. Although it inhibits KLRK1/NKG2D-mediated signaling, it does not bind known ligands of KLRK1/NKG2D and therefore is not its inhibitory counterpart. May limit activation of myeloid cell subsets in response to infection or tissue inflammation. May protect target cells against natural killer cell-mediated lysis. May negatively regulate cell cycle and differentiation of melanocytes via inactivation of STAT3. This Mus musculus (Mouse) protein is C-type lectin domain family 12 member B (Clec12b).